Here is a 261-residue protein sequence, read N- to C-terminus: Glucosamine-6-phosphate deaminase (261 aa).

D67 serves as the catalytic Proton acceptor; for enolization step. D136 acts as the For ring-opening step in catalysis. The active-site Proton acceptor; for ring-opening step is H138. Catalysis depends on E143, which acts as the For ring-opening step.

The protein belongs to the glucosamine/galactosamine-6-phosphate isomerase family. NagB subfamily.

The catalysed reaction is alpha-D-glucosamine 6-phosphate + H2O = beta-D-fructose 6-phosphate + NH4(+). Its pathway is amino-sugar metabolism; N-acetylneuraminate degradation; D-fructose 6-phosphate from N-acetylneuraminate: step 5/5. In terms of biological role, catalyzes the reversible isomerization-deamination of glucosamine 6-phosphate (GlcN6P) to form fructose 6-phosphate (Fru6P) and ammonium ion. The sequence is that of Glucosamine-6-phosphate deaminase from Mycolicibacterium smegmatis (strain ATCC 700084 / mc(2)155) (Mycobacterium smegmatis).